The following is a 307-amino-acid chain: NAD kinase (307 aa).

Asp-80 (proton acceptor) is an active-site residue. Residues 80-81 (DG), His-85, 154-155 (ND), His-165, His-182, Asp-184, 195-200 (TAYALS), and Gln-254 contribute to the NAD(+) site.

The protein belongs to the NAD kinase family. Requires a divalent metal cation as cofactor.

The protein resides in the cytoplasm. It catalyses the reaction NAD(+) + ATP = ADP + NADP(+) + H(+). Its function is as follows. Involved in the regulation of the intracellular balance of NAD and NADP, and is a key enzyme in the biosynthesis of NADP. Catalyzes specifically the phosphorylation on 2'-hydroxyl of the adenosine moiety of NAD to yield NADP. The protein is NAD kinase of Acinetobacter baylyi (strain ATCC 33305 / BD413 / ADP1).